Consider the following 179-residue polypeptide: Large ribosomal subunit protein uL5 (179 aa).

This sequence belongs to the universal ribosomal protein uL5 family. As to quaternary structure, part of the 50S ribosomal subunit; part of the 5S rRNA/L5/L18/L25 subcomplex. Contacts the 5S rRNA and the P site tRNA. Forms a bridge to the 30S subunit in the 70S ribosome.

Functionally, this is one of the proteins that bind and probably mediate the attachment of the 5S RNA into the large ribosomal subunit, where it forms part of the central protuberance. In the 70S ribosome it contacts protein S13 of the 30S subunit (bridge B1b), connecting the 2 subunits; this bridge is implicated in subunit movement. Contacts the P site tRNA; the 5S rRNA and some of its associated proteins might help stabilize positioning of ribosome-bound tRNAs. The sequence is that of Large ribosomal subunit protein uL5 from Burkholderia mallei (strain NCTC 10247).